The following is a 469-amino-acid chain: Glutamate-1-semialdehyde 2,1-aminomutase, chloroplastic (469 aa).

The transit peptide at 1 to 34 (MAGAAAAVASGISIRPVAAPKISRAPRSRSVVRA) directs the protein to the chloroplast. The residue at position 309 (K309) is an N6-(pyridoxal phosphate)lysine.

The protein belongs to the class-III pyridoxal-phosphate-dependent aminotransferase family. HemL subfamily. In terms of assembly, homodimer. Pyridoxal 5'-phosphate serves as cofactor.

It is found in the plastid. Its subcellular location is the chloroplast. The catalysed reaction is (S)-4-amino-5-oxopentanoate = 5-aminolevulinate. It participates in porphyrin-containing compound metabolism; protoporphyrin-IX biosynthesis; 5-aminolevulinate from L-glutamyl-tRNA(Glu): step 2/2. It functions in the pathway porphyrin-containing compound metabolism; chlorophyll biosynthesis. This Hordeum vulgare (Barley) protein is Glutamate-1-semialdehyde 2,1-aminomutase, chloroplastic (GSA).